The sequence spans 151 residues: Spore coat polysaccharide biosynthesis protein SpsL (151 aa).

This sequence to dTDP-4-dehydrorhamnose reductase.

Its pathway is spore coat biogenesis; spore coat polysaccharide biosynthesis. This is Spore coat polysaccharide biosynthesis protein SpsL (spsL) from Bacillus subtilis (strain 168).